Reading from the N-terminus, the 304-residue chain is Non-specific ribonucleoside hydrolase RihC (304 aa).

The active site involves His-233.

This sequence belongs to the IUNH family. RihC subfamily.

Hydrolyzes both purine and pyrimidine ribonucleosides with a broad-substrate specificity. The protein is Non-specific ribonucleoside hydrolase RihC of Escherichia coli (strain SMS-3-5 / SECEC).